The following is a 257-amino-acid chain: Transcription factor bHLH55 (257 aa).

The 53-residue stretch at 74 to 126 (NKRAKHKELERQRRQENTSLFKILRYLLPSQYIKGKRSSADHVLEAVNYIKDL) folds into the bHLH domain.

In terms of assembly, homodimer. In terms of tissue distribution, expressed in roots, leaves, stems, and flowers.

Its subcellular location is the nucleus. This Arabidopsis thaliana (Mouse-ear cress) protein is Transcription factor bHLH55 (BHLH55).